The following is a 332-amino-acid chain: 4-hydroxyproline 2-epimerase 2 (332 aa).

Residue Cys-89 is the Proton acceptor of the active site. Substrate contacts are provided by residues His-222, Asp-248, and 253-254; that span reads GT.

It belongs to the proline racemase family.

It catalyses the reaction trans-4-hydroxy-L-proline = cis-4-hydroxy-D-proline. Functionally, catalyzes the epimerization of trans-4-hydroxy-L-proline (t4LHyp) to cis-4-hydroxy-D-proline (c4DHyp). Is likely involved in a degradation pathway that converts t4LHyp to alpha-ketoglutarate. Displays no proline racemase activity. The chain is 4-hydroxyproline 2-epimerase 2 from Rhizobium rhizogenes (strain K84 / ATCC BAA-868) (Agrobacterium radiobacter).